A 535-amino-acid chain; its full sequence is Phosphoenolpyruvate carboxykinase (ATP) (535 aa).

Positions 59, 201, and 207 each coordinate substrate. ATP is bound by residues K207, H226, and 243-251; that span reads GLSGTGKTT. The Mn(2+) site is built by K207 and H226. A Mn(2+)-binding site is contributed by D264. Residues E292, R328, 444–445, and T450 contribute to the ATP site; that span reads RI. R328 contacts substrate.

The protein belongs to the phosphoenolpyruvate carboxykinase (ATP) family. Mn(2+) serves as cofactor.

The protein resides in the cytoplasm. It catalyses the reaction oxaloacetate + ATP = phosphoenolpyruvate + ADP + CO2. It participates in carbohydrate biosynthesis; gluconeogenesis. Its function is as follows. Involved in the gluconeogenesis. Catalyzes the conversion of oxaloacetate (OAA) to phosphoenolpyruvate (PEP) through direct phosphoryl transfer between the nucleoside triphosphate and OAA. The polypeptide is Phosphoenolpyruvate carboxykinase (ATP) (Bacteroides thetaiotaomicron (strain ATCC 29148 / DSM 2079 / JCM 5827 / CCUG 10774 / NCTC 10582 / VPI-5482 / E50)).